The primary structure comprises 196 residues: Elongation factor Ts (196 aa).

An involved in Mg(2+) ion dislocation from EF-Tu region spans residues 80–83 (TDFV).

This sequence belongs to the EF-Ts family.

It localises to the cytoplasm. Its function is as follows. Associates with the EF-Tu.GDP complex and induces the exchange of GDP to GTP. It remains bound to the aminoacyl-tRNA.EF-Tu.GTP complex up to the GTP hydrolysis stage on the ribosome. This Thermus thermophilus (strain ATCC BAA-163 / DSM 7039 / HB27) protein is Elongation factor Ts.